Here is a 520-residue protein sequence, read N- to C-terminus: Keratin, type II cytoskeletal 72 (520 aa).

The tract at residues 1-133 is head; it reads MSRQLTLYPG…DPEIQKVRAQ (133 aa). Residues 134 to 169 are coil 1A; it reads EREQIKALNNKFASFIDKVRFLEQQNQVLETKWELL. The 314-residue stretch at 134–447 folds into the IF rod domain; sequence EREQIKALNN…KLLESEESRM (314 aa). The interval 170–188 is linker 1; the sequence is QQLDQNNSRRSLEPVHESY. Positions 189–280 are coil 1B; that stretch reads ISNLQKQLEI…VLFEGEIAQM (92 aa). Positions 281-304 are linker 12; that stretch reads QSHISDTSVILSMDNNRQLDLDSI. Residues 305–443 are coil 2; sequence LAEVRAQYEE…ATYRKLLESE (139 aa). A tail region spans residues 444–520; that stretch reads ESRMAGEYPS…SSCVSKKASR (77 aa). The disordered stretch occupies residues 495–520; sequence GSCGSELKDPPAKTSASSCVSKKASR.

This sequence belongs to the intermediate filament family. As to quaternary structure, heterotetramer of two type I and two type II keratins.

In terms of biological role, has a role in hair formation. Specific component of keratin intermediate filaments in the inner root sheath (IRS) of the hair follicle. In Rattus norvegicus (Rat), this protein is Keratin, type II cytoskeletal 72 (Krt72).